We begin with the raw amino-acid sequence, 113 residues long: MKITMLFAALSAASGAFAAPAQAVAAAKDLSIGAGVGIGIGAGVGPYGYPYGAYPGWRLQLLPLRWLSLQWIPLRIPILPMVNTWCSVACAQNPSPAHLHTFKPFTSEQFLFL.

Positions Met1–Ala18 are cleaved as a signal peptide. 6 consecutive repeat copies span residues Ile32–Gly37, Ile40–Gly45, Pro46–Tyr49, Pro50–Ala53, Leu59–Arg65, and Leu69–Arg75. The segment at Ile32 to Gly45 is 2 X 6 AA repeats. The segment at Pro46–Ala53 is 2 X 4 AA approximate tandem repeats. The 2 X 7 AA approximate repeats stretch occupies residues Leu59–Arg75.

It localises to the secreted. The protein is Protein USP1 (USP1) of Puccinia graminis (Black stem rust fungus).